The chain runs to 426 residues: UDP-N-acetylglucosamine 1-carboxyvinyltransferase (426 aa).

23 to 24 (KN) contacts phosphoenolpyruvate. Residue Arg-99 coordinates UDP-N-acetyl-alpha-D-glucosamine. Catalysis depends on Asp-123, which acts as the Proton donor. UDP-N-acetyl-alpha-D-glucosamine-binding residues include Asp-311 and Ile-333.

Belongs to the EPSP synthase family. MurA subfamily.

The protein resides in the cytoplasm. The enzyme catalyses phosphoenolpyruvate + UDP-N-acetyl-alpha-D-glucosamine = UDP-N-acetyl-3-O-(1-carboxyvinyl)-alpha-D-glucosamine + phosphate. It participates in cell wall biogenesis; peptidoglycan biosynthesis. In terms of biological role, cell wall formation. Adds enolpyruvyl to UDP-N-acetylglucosamine. The chain is UDP-N-acetylglucosamine 1-carboxyvinyltransferase from Nocardia farcinica (strain IFM 10152).